A 106-amino-acid chain; its full sequence is UPF0145 protein CLL_A2504 (106 aa).

This sequence belongs to the UPF0145 family.

The sequence is that of UPF0145 protein CLL_A2504 from Clostridium botulinum (strain Eklund 17B / Type B).